The primary structure comprises 207 residues: Uridine kinase (207 aa).

Residue 11–18 (GGSGSGKT) coordinates ATP.

This sequence belongs to the uridine kinase family.

It is found in the cytoplasm. The enzyme catalyses uridine + ATP = UMP + ADP + H(+). The catalysed reaction is cytidine + ATP = CMP + ADP + H(+). Its pathway is pyrimidine metabolism; CTP biosynthesis via salvage pathway; CTP from cytidine: step 1/3. The protein operates within pyrimidine metabolism; UMP biosynthesis via salvage pathway; UMP from uridine: step 1/1. The protein is Uridine kinase of Staphylococcus epidermidis (strain ATCC 35984 / DSM 28319 / BCRC 17069 / CCUG 31568 / BM 3577 / RP62A).